The sequence spans 393 residues: Stearoyl-[acyl-carrier-protein] 9-desaturase, chloroplastic (393 aa).

The N-terminal 30 residues, 1–30 (MALNFNSPTFQSIKTTRRPCSPLRSPRVFM), are a transit peptide targeting the chloroplast. Fe cation is bound by residues glutamate 135, glutamate 173, histidine 176, glutamate 226, glutamate 259, and histidine 262.

This sequence belongs to the fatty acid desaturase type 2 family. As to quaternary structure, homodimer. Fe(2+) serves as cofactor.

It is found in the plastid. The protein localises to the chloroplast. The enzyme catalyses octadecanoyl-[ACP] + 2 reduced [2Fe-2S]-[ferredoxin] + O2 + 2 H(+) = (9Z)-octadecenoyl-[ACP] + 2 oxidized [2Fe-2S]-[ferredoxin] + 2 H2O. The protein operates within lipid metabolism; fatty acid metabolism. In terms of biological role, converts stearoyl-ACP to oleoyl-ACP by introduction of a cis double bond between carbons 9 and 10 of the acyl chain. The sequence is that of Stearoyl-[acyl-carrier-protein] 9-desaturase, chloroplastic from Solanum commersonii (Commerson's wild potato).